The chain runs to 1182 residues: MESLLENPVRAVLYLKELTAIVQNQQSLIHTQRERIDELERRLDELSAENRSLWEHQQLLQAQPPPGLVPPSSAPLPAAPATAPAAAARAQEPLQDQGQRSAAAPHPAPDRPPRQHHGQLLEQPQRGPGSRAHTPQSPHKHLGTQGAVTDKEKERPPSCCAAAGALLQHKSPSALGKGVLSRRPENETVLHQFCCPAADACSDLASQSDGSCTQAGGGMEDSVVAAAAVAAGRPSAHAPKAQAQELQEEEERPGAGAASPRAGPQHKASPGRQQPALATALCPHAPAASDYELSLDLKNKQIEMLEHKYGGHLVSRRAACTIQTAFRQYQLSKNFEKIRNSLLESRLPRRISLRKVRSPTAESLAAEKALMEGYGLVGLPLVRSPSLPPTFAGTLTELEDSFTEQVQSLAKSIDDALSTWSLKTMCSLRESGAYQLHQALQAAAGPPGLEAEGRAPESAGPGPGDDAAETPGLPPAHSGTLMMAFRDVTVQIANQNISVSSSTALSVANCLGAQTVQAPAEPAAGKAEQGETSGREAPEAPAVGREDASAEDSCAEAAASGAADGATAPKTEEEEEEEETAEVGRGAEAEAGDLEQLSSSSTSTKSAKSGSEASASASKDALQAMILSLPRYHCENPASCKSPTLSTDTLRKRLYRIGLNLFNINPDKGIQFLISRGFIPDTPIGVAHFLLQRKGLSRQMIGEFLGNSKKQFNRDVLDCVVDEMDFSSMELDEALRKFQAHIRVQGEAQKVERLIEAFSQRYCMCNPEVVQQFHNPDTIFILAFAIILLNTDMYSPNIKPDRKMMLEDFIRNLRGVDDGADIPRELVVGIYERIQQKELKSNEDHVTYVTKVEKSIVGMKTVLSVPHRRLVCCSRLFEVTDVNKLQKQAAHQREVFLFNDLLVILKLCPKKKSSSTYTFCKSVGLLGMQFQLFENEYYSHGITLVTPLSGSEKKQVLHFCALGSDEMQKFVEDLKESIAEVTELEQIRIEWELEKQQGTKTLSFKPCGAQGDPQSKQGSPTAKREAALRERPAESTVEVSIHNRLQTSQHNSGLGAERGAPVPPPDLQPSPPRQQTPPLPPPPPTPPGTLVQCQQIVKVIVLDKPCLARMEPLLSQALSCYTSSSSDSCGSTPLGGPGSPVKVTHQPPLPPPPPPYNHPHQFCPPGSLLHGHRYSSGSRSLV.

Positions 20 to 56 (AIVQNQQSLIHTQRERIDELERRLDELSAENRSLWEH) form a coiled coil. 2 disordered regions span residues 62 to 157 (AQPP…ERPP) and 230 to 275 (AAGR…RQQP). The span at 63–78 (QPPPGLVPPSSAPLPA) shows a compositional bias: pro residues. Low complexity-rich tracts occupy residues 79–105 (APAT…AAAP) and 254–263 (GAGAASPRAG). The residue at position 259 (S259) is a Phosphoserine. The IQ domain occupies 315–344 (SRRAACTIQTAFRQYQLSKNFEKIRNSLLE). Disordered regions lie at residues 444–479 (AGPP…AHSG) and 521–616 (EPAA…ASAS). Residues 533–548 (SGREAPEAPAVGREDA) are compositionally biased toward basic and acidic residues. The segment covering 555–569 (AEAAASGAADGATAP) has biased composition (low complexity). Over residues 572 to 581 (EEEEEEEETA) the composition is skewed to acidic residues. Over residues 598–616 (SSSSTSTKSAKSGSEASAS) the composition is skewed to low complexity. An SEC7 domain is found at 644–837 (TLSTDTLRKR…VGIYERIQQK (194 aa)). In terms of domain architecture, PH spans 850-983 (TKVEKSIVGM…LKESIAEVTE (134 aa)). The stretch at 964-992 (SDEMQKFVEDLKESIAEVTELEQIRIEWE) forms a coiled coil. Disordered stretches follow at residues 1002–1090 (LSFK…PGTL) and 1121–1182 (YTSS…RSLV). Residues 1022-1033 (AKREAALRERPA) show a composition bias toward basic and acidic residues. Residues 1043 to 1052 (NRLQTSQHNS) show a composition bias toward polar residues. Pro residues predominate over residues 1061-1087 (PVPPPDLQPSPPRQQTPPLPPPPPTPP). Positions 1121–1132 (YTSSSSDSCGST) are enriched in low complexity. Over residues 1147-1157 (PPLPPPPPPYN) the composition is skewed to pro residues.

It belongs to the BRAG family. As to quaternary structure, interacts with DLG1 and DLG4. Interacts with GPHN. Expressed specifically in the adult brain, predominantly in the cerebral cortex and the olfactory bulb, but not in the fetal brain. Expressed only in mature neurons, but not in undifferentiated neural stem precursor cells (NSPCs), nor in glioma cells.

It is found in the cytoplasm. Its subcellular location is the postsynaptic density. Its function is as follows. Acts as a guanine nucleotide exchange factor (GEF) for ARF1. The polypeptide is IQ motif and SEC7 domain-containing protein 3 (IQSEC3) (Homo sapiens (Human)).